Reading from the N-terminus, the 574-residue chain is Glycine--tRNA ligase (574 aa).

The substrate site is built by R96 and E162. ATP-binding positions include 194-196, 204-209, 327-328, and 450-453; these read RNE, IRLREF, EC, and GIDR. Residue 209–213 participates in substrate binding; that stretch reads FTQAE. Residue 446 to 450 participates in substrate binding; sequence EPSYG.

Belongs to the class-II aminoacyl-tRNA synthetase family.

It is found in the cytoplasm. The catalysed reaction is tRNA(Gly) + glycine + ATP = glycyl-tRNA(Gly) + AMP + diphosphate. Its function is as follows. Catalyzes the attachment of glycine to tRNA(Gly). The chain is Glycine--tRNA ligase from Methanococcus vannielii (strain ATCC 35089 / DSM 1224 / JCM 13029 / OCM 148 / SB).